The primary structure comprises 311 residues: Methionyl-tRNA formyltransferase (311 aa).

109–112 (SLLP) is a (6S)-5,6,7,8-tetrahydrofolate binding site.

The protein belongs to the Fmt family.

It carries out the reaction L-methionyl-tRNA(fMet) + (6R)-10-formyltetrahydrofolate = N-formyl-L-methionyl-tRNA(fMet) + (6S)-5,6,7,8-tetrahydrofolate + H(+). In terms of biological role, attaches a formyl group to the free amino group of methionyl-tRNA(fMet). The formyl group appears to play a dual role in the initiator identity of N-formylmethionyl-tRNA by promoting its recognition by IF2 and preventing the misappropriation of this tRNA by the elongation apparatus. This is Methionyl-tRNA formyltransferase from Staphylococcus aureus (strain JH1).